Reading from the N-terminus, the 463-residue chain is ATP-dependent rRNA helicase SPB4 (463 aa).

Positions 4-32 (KGIEDVAMNGRLKKEIEENGFGKMTEVQL) match the Q motif motif. In terms of domain architecture, Helicase ATP-binding spans 35-205 (IPEVLKGKDV…RVFLRNPVSI (171 aa)). ATP is bound at residue 48–55 (SPTGTGKT). The DEAD box signature appears at 153–156 (DEAD). In terms of domain architecture, Helicase C-terminal spans 226–382 (KLLVLMDIVT…DIKSMISPEL (157 aa)). Positions 444–463 (RDGKKRALPKKKYRKKRAIK) are disordered. The segment covering 446 to 463 (GKKRALPKKKYRKKRAIK) has biased composition (basic residues).

This sequence belongs to the DEAD box helicase family. DDX55/SPB4 subfamily. In terms of assembly, component of pre-60S ribosomal complexes.

Its subcellular location is the nucleus. The protein localises to the nucleolus. It catalyses the reaction ATP + H2O = ADP + phosphate + H(+). In terms of biological role, ATP-binding RNA helicase involved in the biogenesis of 60S ribosomal subunits. Binds 90S pre-ribosomal particles and dissociates from pre-60S ribosomal particles after processing of 27SB pre-rRNA. Required for the normal formation of 18S rRNA through the processing of pre-rRNAs at sites A0, A1 and A2, and the normal formation of 25S and 5.8S rRNAs through the processing of pre-rRNAs at sites C1 and C2. The polypeptide is ATP-dependent rRNA helicase SPB4 (Encephalitozoon cuniculi (strain GB-M1) (Microsporidian parasite)).